A 160-amino-acid chain; its full sequence is SsrA-binding protein (160 aa).

It belongs to the SmpB family.

It is found in the cytoplasm. Functionally, required for rescue of stalled ribosomes mediated by trans-translation. Binds to transfer-messenger RNA (tmRNA), required for stable association of tmRNA with ribosomes. tmRNA and SmpB together mimic tRNA shape, replacing the anticodon stem-loop with SmpB. tmRNA is encoded by the ssrA gene; the 2 termini fold to resemble tRNA(Ala) and it encodes a 'tag peptide', a short internal open reading frame. During trans-translation Ala-aminoacylated tmRNA acts like a tRNA, entering the A-site of stalled ribosomes, displacing the stalled mRNA. The ribosome then switches to translate the ORF on the tmRNA; the nascent peptide is terminated with the 'tag peptide' encoded by the tmRNA and targeted for degradation. The ribosome is freed to recommence translation, which seems to be the essential function of trans-translation. This Cronobacter sakazakii (strain ATCC BAA-894) (Enterobacter sakazakii) protein is SsrA-binding protein.